Here is a 463-residue protein sequence, read N- to C-terminus: Glycine--tRNA ligase (463 aa).

2 residues coordinate substrate: arginine 100 and glutamate 175. ATP-binding positions include 207-209, 217-222, 291-292, and 335-338; these read RNE, FRTREF, EL, and GADR. Residue 222–226 coordinates substrate; it reads FEQME. 331–335 contributes to the substrate binding site; it reads EPSLG.

It belongs to the class-II aminoacyl-tRNA synthetase family. As to quaternary structure, homodimer.

It localises to the cytoplasm. It carries out the reaction tRNA(Gly) + glycine + ATP = glycyl-tRNA(Gly) + AMP + diphosphate. In terms of biological role, catalyzes the attachment of glycine to tRNA(Gly). This chain is Glycine--tRNA ligase, found in Clostridium beijerinckii (strain ATCC 51743 / NCIMB 8052) (Clostridium acetobutylicum).